The primary structure comprises 212 residues: 3-oxo-tetronate 4-phosphate decarboxylase (212 aa).

Glu79 functions as the Proton acceptor in the catalytic mechanism. Residues Glu79, His98, and His100 each coordinate Zn(2+). Tyr125 functions as the Proton donor in the catalytic mechanism. His165 contributes to the Zn(2+) binding site.

This sequence belongs to the aldolase class II family. AraD/FucA subfamily. Zn(2+) serves as cofactor.

It catalyses the reaction 3-dehydro-4-O-phospho-D-erythronate + H(+) = dihydroxyacetone phosphate + CO2. The catalysed reaction is 3-dehydro-4-O-phospho-L-erythronate + H(+) = dihydroxyacetone phosphate + CO2. Its function is as follows. Catalyzes the decarboxylation of 3-oxo-tetronate 4-phosphate to dihydroxyacetone phosphate (DHAP) and CO(2). This chain is 3-oxo-tetronate 4-phosphate decarboxylase, found in Escherichia coli (strain K12).